We begin with the raw amino-acid sequence, 457 residues long: MTVTVRFAPSPTGYIHIGNTRTALSNWLYASKNNGKFILRYDDTDVERSKDEYAQAIAVDLDWLGVRPDRVEYQSKRFDIYAKAVEKLKTAGLLYACYETADELERRRKLRLARRLPPVYGREALKLTDAEKAALEAEGRKPHWRFLLPNFESDPFATQRTEVHWDDLVRGPQTVDLASMSDPILVREDGTYLYTLPSVVDDIDMGVTHIIRGDDHVTNTGVQISIFKALGATPPVFGHHNLLTTISGEGLSKRTGALSVGSLREAGYEPMAVASLAILIGTSESVTAAPDMAALAEHFDLASISKSSAKFDPSELDALNRSLLHEMPFEKAKPRLEALGICGAKAESFWLAVRGNLDRFSDVSHWWQVVSGDLPEAPDLSGEDRDFVRHAFDLLPPEPWNGQTWKSWTEAVKSATGRKGKNLFMPLRLALTGQAHGPELADLLVLVGLERTKSRRP.

The 'HIGH' region motif lies at 9–19 (PSPTGYIHIGN). The 'KMSKS' region signature appears at 250-254 (GLSKR). Residue Lys253 participates in ATP binding.

The protein belongs to the class-I aminoacyl-tRNA synthetase family. Glutamate--tRNA ligase type 1 subfamily. In terms of assembly, monomer.

It localises to the cytoplasm. It catalyses the reaction tRNA(Glu) + L-glutamate + ATP = L-glutamyl-tRNA(Glu) + AMP + diphosphate. Functionally, catalyzes the attachment of glutamate to tRNA(Glu) in a two-step reaction: glutamate is first activated by ATP to form Glu-AMP and then transferred to the acceptor end of tRNA(Glu). This Brucella ovis (strain ATCC 25840 / 63/290 / NCTC 10512) protein is Glutamate--tRNA ligase 1.